Here is a 433-residue protein sequence, read N- to C-terminus: Trigger factor (433 aa).

The PPIase FKBP-type domain maps to 161 to 246 (EDRATIDFTG…LKKVEERELP (86 aa)).

This sequence belongs to the FKBP-type PPIase family. Tig subfamily.

It localises to the cytoplasm. It catalyses the reaction [protein]-peptidylproline (omega=180) = [protein]-peptidylproline (omega=0). Functionally, involved in protein export. Acts as a chaperone by maintaining the newly synthesized protein in an open conformation. Functions as a peptidyl-prolyl cis-trans isomerase. In Edwardsiella ictaluri (strain 93-146), this protein is Trigger factor.